Reading from the N-terminus, the 310-residue chain is Protoheme IX farnesyltransferase (310 aa).

The next 9 helical transmembrane spans lie at 37–57 (LITV…DVLL), 64–84 (LTLL…CYLN), 113–133 (ILAL…IVNH), 134–154 (VAAV…TMWL), 159–181 (TINT…AAVT), 186–208 (IDAW…ALAM), 215–237 (RAAG…QIVW), 257–277 (MLVM…GLKI), and 290–310 (MFFF…LVSL).

This sequence belongs to the UbiA prenyltransferase family. Protoheme IX farnesyltransferase subfamily. Interacts with CtaA.

It localises to the cell membrane. It catalyses the reaction heme b + (2E,6E)-farnesyl diphosphate + H2O = Fe(II)-heme o + diphosphate. It participates in porphyrin-containing compound metabolism; heme O biosynthesis; heme O from protoheme: step 1/1. In terms of biological role, converts heme B (protoheme IX) to heme O by substitution of the vinyl group on carbon 2 of heme B porphyrin ring with a hydroxyethyl farnesyl side group. This is Protoheme IX farnesyltransferase from Exiguobacterium sibiricum (strain DSM 17290 / CCUG 55495 / CIP 109462 / JCM 13490 / 255-15).